We begin with the raw amino-acid sequence, 308 residues long: Ribonuclease HIII (308 aa).

In terms of domain architecture, RNase H type-2 spans 91–308; the sequence is KNVIGSDEVG…TEKALKMVKK (218 aa). A divalent metal cation-binding residues include Asp-97, Glu-98, and Asp-202.

The protein belongs to the RNase HII family. RnhC subfamily. It depends on Mn(2+) as a cofactor. The cofactor is Mg(2+).

Its subcellular location is the cytoplasm. It catalyses the reaction Endonucleolytic cleavage to 5'-phosphomonoester.. Endonuclease that specifically degrades the RNA of RNA-DNA hybrids. The sequence is that of Ribonuclease HIII from Listeria monocytogenes serovar 1/2a (strain ATCC BAA-679 / EGD-e).